The chain runs to 160 residues: Small ribosomal subunit protein uS7 (160 aa).

Belongs to the universal ribosomal protein uS7 family. Part of the 30S ribosomal subunit. Contacts proteins S9 and S11.

Functionally, one of the primary rRNA binding proteins, it binds directly to 16S rRNA where it nucleates assembly of the head domain of the 30S subunit. Is located at the subunit interface close to the decoding center, probably blocks exit of the E-site tRNA. This is Small ribosomal subunit protein uS7 from Rickettsia conorii (strain ATCC VR-613 / Malish 7).